Consider the following 78-residue polypeptide: Ferredoxin oxidoreductase 2 subunit ForD (78 aa).

4Fe-4S ferredoxin-type domains are found at residues 3–35 and 37–66; these read FVAD…FKAS and NSAW…HCIE. Positions 12, 17, 20, 24, 46, 49, 52, and 56 each coordinate [4Fe-4S] cluster.

As to quaternary structure, heterotetramer of one alpha, one beta, one delta and one gamma chain. The cofactor is [4Fe-4S] cluster.

In Aquifex aeolicus (strain VF5), this protein is Ferredoxin oxidoreductase 2 subunit ForD (forD2).